A 377-amino-acid polypeptide reads, in one-letter code: Presenilin-associated rhomboid-like protein, mitochondrial (377 aa).

A mitochondrion-targeting transit peptide spans 1–50 (MALQGWVQRGWRCGPAWAPPLGGGYRELSATQAPRLLGRRFNLFVQQKCG). At 51-99 (FRKAPRKVEPRRSDTGSSGEAYKRSALIPPLEETVFYPSPYPIRTLVKP) the chain is on the mitochondrial matrix side. 2 positions are modified to phosphoserine: S63 and S68. The helical transmembrane segment at 100–119 (FFFTIGFTGCAFGSAAIWQY) threads the bilayer. Residues 120-165 (ESLKSRVQSYFDGIKADWLDSIRPQKEGNLRKEINKWWNSLSDGQR) are Mitochondrial intermembrane-facing. A helical transmembrane segment spans residues 166–185 (TVTGIIAANALVFCLWRVPS). At 186-205 (LQRTMIRYFTSNPASKVLCS) the chain is on the mitochondrial matrix side. A helical membrane pass occupies residues 206–228 (PMLLSTFSHFSLFHMAANMYVLW). Residues 229 to 242 (SFSSSIVNILGQEQ) lie on the Mitochondrial intermembrane side of the membrane. Residues 243–260 (FVAVYLSAGVISNFVSYV) traverse the membrane as a helical segment. Topologically, residues 261–270 (CKVATGRYGP) are mitochondrial matrix. The chain crosses the membrane as a helical span at residues 271-287 (SLGASGAIMTVLAAVCT). S275 (nucleophile) is an active-site residue. Over 288-293 (KIPEGR) the chain is Mitochondrial intermembrane. Residues 294-316 (LAIIFLPVFTFTAGNALKAIIAM) traverse the membrane as a helical segment. Residues 317–330 (DTAGMILGWKFFDH) lie on the Mitochondrial matrix side of the membrane. Residues 331–352 (AAHLGGALFGIWYITYGHELIW) form a helical membrane-spanning segment. H333 is a catalytic residue. Residues 353-377 (KNREPLVKIWHEIRTNGPKKGGGSK) are Mitochondrial intermembrane-facing.

Belongs to the peptidase S54 family. In terms of assembly, interacts with PSEN1 and PSEN2. Binds OPA1. P-beta is proteolytically processed (beta-cleavage) in a PARL-dependent manner.

The protein localises to the mitochondrion inner membrane. The protein resides in the nucleus. The enzyme catalyses Cleaves type-1 transmembrane domains using a catalytic dyad composed of serine and histidine that are contributed by different transmembrane domains.. In terms of biological role, required for the control of apoptosis during postnatal growth. Essential for proteolytic processing of an antiapoptotic form of OPA1 which prevents the release of mitochondrial cytochrome c in response to intrinsic apoptotic signals. Required for the maturation of PINK1 into its 52kDa mature form after its cleavage by mitochondrial-processing peptidase (MPP). Promotes cleavage of serine/threonine-protein phosphatase PGAM5 in damaged mitochondria in response to loss of mitochondrial membrane potential. Mediates differential cleavage of PINK1 and PGAM5 depending on the health status of mitochondria, disassociating from PINK1 and associating with PGAM5 in response to mitochondrial membrane potential loss. Required for processing of CLPB into a form with higher protein disaggregase activity by removing an autoinhibitory N-terminal peptide. Promotes processing of DIABLO/SMAC in the mitochondrion which is required for DIABLO apoptotic activity. Also required for cleavage of STARD7 and TTC19. Promotes changes in mitochondria morphology regulated by phosphorylation of P-beta domain. This Mus musculus (Mouse) protein is Presenilin-associated rhomboid-like protein, mitochondrial (Parl).